Here is a 586-residue protein sequence, read N- to C-terminus: CTP synthase 2 (586 aa).

Positions 300–554 (SIALVGKYTK…LAATGNLNAY (255 aa)) constitute a Glutamine amidotransferase type-1 domain. Residues C399, H526, and E528 each act as for GATase activity in the active site. The segment at 563–586 (SSDRYSDASDDSFSEPRIAELEIS) is disordered. Phosphoserine is present on residues S568, S571, and S574.

This sequence belongs to the CTP synthase family.

It catalyses the reaction UTP + L-glutamine + ATP + H2O = CTP + L-glutamate + ADP + phosphate + 2 H(+). It participates in pyrimidine metabolism; CTP biosynthesis via de novo pathway; CTP from UDP: step 2/2. Functionally, catalyzes the ATP-dependent amination of UTP to CTP with either L-glutamine or ammonia as the source of nitrogen. Constitutes the rate-limiting enzyme in the synthesis of cytosine nucleotides. The protein is CTP synthase 2 (CTPS2) of Homo sapiens (Human).